The following is a 113-amino-acid chain: U11-theraphotoxin-Hhn1f (113 aa).

Positions 1 to 21 (MNTVRVTFLLVFVLAVSLGQA) are cleaved as a signal peptide. A propeptide spanning residues 22 to 74 (DKDENRMEMQEKTEQGKSYLDFAENLLLQKLEELEAKLLEEDSKESRNSRQKR) is cleaved from the precursor. Residues 61 to 82 (EEDSKESRNSRQKRCIGEGVPC) are disordered. 3 disulfide bridges follow: Cys-75–Cys-90, Cys-82–Cys-95, and Cys-89–Cys-110.

It belongs to the neurotoxin 14 (magi-1) family. 01 (HNTX-16) subfamily. Expressed by the venom gland.

It localises to the secreted. Functionally, probable ion channel inhibitor. This Cyriopagopus hainanus (Chinese bird spider) protein is U11-theraphotoxin-Hhn1f.